The chain runs to 370 residues: 4-hydroxy-3-methylbut-2-en-1-yl diphosphate synthase (flavodoxin) (370 aa).

The [4Fe-4S] cluster site is built by Cys271, Cys274, Cys306, and Glu313.

This sequence belongs to the IspG family. [4Fe-4S] cluster serves as cofactor.

The catalysed reaction is (2E)-4-hydroxy-3-methylbut-2-enyl diphosphate + oxidized [flavodoxin] + H2O + 2 H(+) = 2-C-methyl-D-erythritol 2,4-cyclic diphosphate + reduced [flavodoxin]. The protein operates within isoprenoid biosynthesis; isopentenyl diphosphate biosynthesis via DXP pathway; isopentenyl diphosphate from 1-deoxy-D-xylulose 5-phosphate: step 5/6. In terms of biological role, converts 2C-methyl-D-erythritol 2,4-cyclodiphosphate (ME-2,4cPP) into 1-hydroxy-2-methyl-2-(E)-butenyl 4-diphosphate. The sequence is that of 4-hydroxy-3-methylbut-2-en-1-yl diphosphate synthase (flavodoxin) from Actinobacillus pleuropneumoniae serotype 5b (strain L20).